We begin with the raw amino-acid sequence, 735 residues long: Zinc finger CCCH domain-containing protein 14 (735 aa).

The residue at position 1 (methionine 1) is an N-acetylmethionine. The interval 78–153 is disordered; the sequence is TEPSSLKSPD…RHSYDDGAST (76 aa). Phosphoserine is present on serine 85. Glycyl lysine isopeptide (Lys-Gly) (interchain with G-Cter in SUMO2) cross-links involve residues lysine 99, lysine 139, lysine 175, and lysine 198. Residues 131 to 144 show a composition bias toward polar residues; it reads VSTSSQEQKSTNVR. A Phosphoserine modification is found at serine 240. Residues lysine 245, lysine 283, and lysine 295 each participate in a glycyl lysine isopeptide (Lys-Gly) (interchain with G-Cter in SUMO2) cross-link. A disordered region spans residues 308–351; the sequence is FSHDGEEEEEDEDYGTRIGSLSSSVSVPAKPERRPSLPPSKQAN. A phosphoserine mark is found at serine 309, serine 327, and serine 343. Lysine 357 carries the N6-acetyllysine; alternate modification. Residue lysine 357 forms a Glycyl lysine isopeptide (Lys-Gly) (interchain with G-Cter in SUMO2); alternate linkage. Lysine 378 participates in a covalent cross-link: Glycyl lysine isopeptide (Lys-Gly) (interchain with G-Cter in SUMO2). Phosphoserine occurs at positions 390 and 409. The interval 399-431 is disordered; it reads VQGQNRAPRISPPVKEEEAKGDNTGKSQGTQQR. A compositionally biased stretch (basic and acidic residues) spans 412–421; sequence VKEEEAKGDN. Lysine 413 participates in a covalent cross-link: Glycyl lysine isopeptide (Lys-Gly) (interchain with G-Cter in SUMO2). Residues 422–431 show a composition bias toward polar residues; that stretch reads TGKSQGTQQR. A Glycyl lysine isopeptide (Lys-Gly) (interchain with G-Cter in SUMO2) cross-link involves residue lysine 489. Phosphoserine is present on residues serine 498, serine 515, serine 527, and serine 620. C3H1-type zinc fingers lie at residues 595-620, 621-640, 641-656, 681-698, and 700-718; these read EKLL…HPIS, PCKA…VHPN, CKYD…PFTH, CRYF…YHPK, and CRFN…HPTI.

Belongs to the ZC3H14 family. In terms of assembly, homodimer; facilitating circular RNAs (circRNAs) formation. Associates with the spliceosome. Interacts with HOOK2. Interacts with ZFC3H1 in a RNase-sensitive manner. As to expression, expressed in hippocampal pyramidal neurons (at protein level). Expressed in kidney, liver, muscle, heart brain and testes. Expressed in hippocampal pyramidal neurons.

It is found in the nucleus speckle. Functionally, RNA-binding protein involved in the biogenesis of circular RNAs (circRNAs), which are produced by back-splicing circularization of pre-mRNAs. Acts by binding to both exon-intron boundary and 3'-UTR of pre-mRNAs to promote circRNA biogenesis through dimerization and the association with the spliceosome. Required for spermatogenesis via involvement in circRNA biogenesis. Regulates the pre-mRNA processing of ATP5MC1; preventing its degradation. Also binds the poly(A) tail of mRNAs; controlling poly(A) length in neuronal cells. The chain is Zinc finger CCCH domain-containing protein 14 from Mus musculus (Mouse).